The sequence spans 250 residues: tRNA (guanine-N(7)-)-methyltransferase (250 aa).

A compositionally biased stretch (basic and acidic residues) spans 1-10; that stretch reads MTPDDPRDAS. The disordered stretch occupies residues 1–30; that stretch reads MTPDDPRDASDASLADATADSASRGHGSFF. The span at 11–24 shows a compositional bias: low complexity; it reads DASLADATADSASR. Residues glutamate 79, glutamate 104, aspartate 131, and aspartate 153 each coordinate S-adenosyl-L-methionine. Residue aspartate 153 is part of the active site. Residues lysine 157 and aspartate 189 each contribute to the substrate site.

Belongs to the class I-like SAM-binding methyltransferase superfamily. TrmB family.

The enzyme catalyses guanosine(46) in tRNA + S-adenosyl-L-methionine = N(7)-methylguanosine(46) in tRNA + S-adenosyl-L-homocysteine. The protein operates within tRNA modification; N(7)-methylguanine-tRNA biosynthesis. In terms of biological role, catalyzes the formation of N(7)-methylguanine at position 46 (m7G46) in tRNA. In Rhodopseudomonas palustris (strain BisA53), this protein is tRNA (guanine-N(7)-)-methyltransferase.